The primary structure comprises 94 residues: Small ribosomal subunit protein uS19 (94 aa).

The protein belongs to the universal ribosomal protein uS19 family.

In terms of biological role, protein S19 forms a complex with S13 that binds strongly to the 16S ribosomal RNA. In Acetivibrio thermocellus (strain ATCC 27405 / DSM 1237 / JCM 9322 / NBRC 103400 / NCIMB 10682 / NRRL B-4536 / VPI 7372) (Clostridium thermocellum), this protein is Small ribosomal subunit protein uS19.